Here is a 68-residue protein sequence, read N- to C-terminus: UPF0434 protein BMA10229_A1047 (68 aa).

The protein belongs to the UPF0434 family.

The polypeptide is UPF0434 protein BMA10229_A1047 (Burkholderia mallei (strain NCTC 10229)).